Here is a 117-residue protein sequence, read N- to C-terminus: Serine rich endogenous peptide 5 (117 aa).

The signal sequence occupies residues 1-31; it reads MATKTSNFVSLRVSLFILLLFISSQVAIADA. The short motif at 41–55 is the SCOOP motif element; the sequence is LQIVRRSRSQRGRQY. The segment covering 42–51 has biased composition (basic residues); that stretch reads QIVRRSRSQR. The interval 42-117 is disordered; the sequence is QIVRRSRSQR…LPYASSPTST (76 aa). The short motif at 47 to 49 is the SxS motif essential for MIK2 binding element; that stretch reads SRS. Positions 60–84 are enriched in pro residues; sequence LRVPPPPPPPLPQMPSAATPPPMPQ.

As to quaternary structure, interacts with MIK2 (via extracellular leucine-rich repeat domain); this interaction triggers the formation of complex between MIK2 and the BAK1/SERK3 and SERK4 coreceptors, and subsequent BAK1 activation by phosphorylation.

The protein localises to the cell membrane. The protein resides in the secreted. It is found in the extracellular space. It localises to the apoplast. Its function is as follows. Brassicaceae-specific phytocytokine (plant endogenous peptide released into the apoplast) perceived by MIK2 in a BAK1/SERK3 and SERK4 coreceptors-dependent manner, that modulates various physiological and antimicrobial processes including growth prevention and reactive oxygen species (ROS) response regulation. This chain is Serine rich endogenous peptide 5, found in Arabidopsis thaliana (Mouse-ear cress).